The primary structure comprises 135 residues: Thioredoxin H5 (135 aa).

In terms of domain architecture, Thioredoxin spans Glu13–Arg128. Catalysis depends on nucleophile residues Cys54 and Cys57. Cys54 and Cys57 form a disulfide bridge.

Belongs to the thioredoxin family. Plant H-type subfamily.

It localises to the cytoplasm. Its function is as follows. Probable thiol-disulfide oxidoreductase that may be involved in the redox regulation of a number of cytosolic enzymes. The chain is Thioredoxin H5 from Oryza sativa subsp. japonica (Rice).